We begin with the raw amino-acid sequence, 214 residues long: Octanoyltransferase (214 aa).

The BPL/LPL catalytic domain occupies Lys31–Tyr206. Residues Arg70 to His77, Ser137 to Gly139, and Gly150 to Ala152 contribute to the substrate site. Cys168 functions as the Acyl-thioester intermediate in the catalytic mechanism.

This sequence belongs to the LipB family.

Its subcellular location is the cytoplasm. It catalyses the reaction octanoyl-[ACP] + L-lysyl-[protein] = N(6)-octanoyl-L-lysyl-[protein] + holo-[ACP] + H(+). It participates in protein modification; protein lipoylation via endogenous pathway; protein N(6)-(lipoyl)lysine from octanoyl-[acyl-carrier-protein]: step 1/2. Functionally, catalyzes the transfer of endogenously produced octanoic acid from octanoyl-acyl-carrier-protein onto the lipoyl domains of lipoate-dependent enzymes. Lipoyl-ACP can also act as a substrate although octanoyl-ACP is likely to be the physiological substrate. The chain is Octanoyltransferase from Marinomonas sp. (strain MWYL1).